The sequence spans 132 residues: Small ribosomal subunit protein uS8c (132 aa).

The protein belongs to the universal ribosomal protein uS8 family. Part of the 30S ribosomal subunit.

The protein localises to the plastid. The protein resides in the chloroplast. Functionally, one of the primary rRNA binding proteins, it binds directly to 16S rRNA central domain where it helps coordinate assembly of the platform of the 30S subunit. The polypeptide is Small ribosomal subunit protein uS8c (rps8) (Psilotum nudum (Whisk fern)).